The sequence spans 456 residues: MASRSLGGLSGIRGGGGGGGKKSLSSRNAAVERRNLITVCRFSVKTLIDRSCFETIDDSSPEFNNFAAILEQILSHRLKGQVTWFGYESPRSFWDYIRVACRKVSQNCICSIENMENVSSSRAKGRAWIRVALMEKHLSEYISTALRDFKTTRRFYEDGAIVLGEEANMLAGMLLGLNAIDFSFCLKGEGLDGSFPAVIDYTPYLKYIQSSDSISSDEEELRTLGSSGSESSTPENVGPPFLMDENSWFNKCKRVKQKYQLTLEQKGYLEELLRLRENQLSESVSQNKILLQRIEDSDLAHKLEKEQLEYIIVELQDQLTVLKNNDLRSRQELTAHLTNQWPSPGALDVNAVALDTLLYRKHNKQWYEKSYQSLDQLSAEVSLSQTSLDPGQSQEGDGKQDTLNIMSEGKEDTPSLLGLCGSLTSVASYKSLTSLKSNDYLASPTTEMTSPGLTPS.

The disordered stretch occupies residues 1–26; that stretch reads MASRSLGGLSGIRGGGGGGGKKSLSS. The segment covering 8-21 has biased composition (gly residues); it reads GLSGIRGGGGGGGK. Omega-N-methylarginine is present on R13. The 133-residue stretch at 57–189 folds into the RUN domain; the sequence is DDSSPEFNNF…IDFSFCLKGE (133 aa). A phosphoserine mark is found at S215 and S216. A coiled-coil region spans residues 300-325; it reads AHKLEKEQLEYIIVELQDQLTVLKNN. Residues 382–405 are disordered; it reads SLSQTSLDPGQSQEGDGKQDTLNI.

It belongs to the RUNDC3 family. In terms of assembly, interacts with RAP2A.

This chain is RUN domain-containing protein 3B (RUNDC3B), found in Macaca fascicularis (Crab-eating macaque).